Here is a 75-residue protein sequence, read N- to C-terminus: Mitochondrial import receptor subunit TOM7-1 (75 aa).

Met-1 bears the N-acetylmethionine mark. The disordered stretch occupies residues 1–28 (MESTISLKVNKGKGKGSKGASSSDDKSK). Over 1–46 (MESTISLKVNKGKGKGSKGASSSDDKSKFDVVKEWTNWSLKKAKVV) the chain is Cytoplasmic. A helical membrane pass occupies residues 47-64 (THYGFIPLVIFVGMNSDP). The Mitochondrial intermembrane portion of the chain corresponds to 65–75 (KPHLFQLLSPV).

The protein belongs to the Tom7 family. As to quaternary structure, forms part of the preprotein translocase complex of the outer mitochondrial membrane (TOM complex) which consists of at least 6 different proteins (TOM5, TOM6, TOM7, TOM20, TOM22/TOM9 and TOM40). Expressed in roots, flowers, young cotyledons and leaves.

The protein localises to the mitochondrion outer membrane. In terms of biological role, seems to act as a modulator of the dynamics of the mitochondrial protein transport machinery. Seems to promote the dissociation of subunits of the outer membrane translocase. This is Mitochondrial import receptor subunit TOM7-1 (TOM7-1) from Arabidopsis thaliana (Mouse-ear cress).